Reading from the N-terminus, the 417-residue chain is Serine hydroxymethyltransferase (417 aa).

Lys-54 carries the post-translational modification N6-acetyllysine. Residues Leu-121 and 125 to 127 each bind (6S)-5,6,7,8-tetrahydrofolate; that span reads GHL. At Lys-229 the chain carries N6-(pyridoxal phosphate)lysine. N6-acetyllysine occurs at positions 250, 285, and 354. Position 355–357 (355–357) interacts with (6S)-5,6,7,8-tetrahydrofolate; sequence SPF. Position 375 is an N6-acetyllysine (Lys-375).

Belongs to the SHMT family. In terms of assembly, homodimer. Pyridoxal 5'-phosphate is required as a cofactor.

The protein localises to the cytoplasm. It carries out the reaction (6R)-5,10-methylene-5,6,7,8-tetrahydrofolate + glycine + H2O = (6S)-5,6,7,8-tetrahydrofolate + L-serine. The protein operates within one-carbon metabolism; tetrahydrofolate interconversion. It participates in amino-acid biosynthesis; glycine biosynthesis; glycine from L-serine: step 1/1. Its function is as follows. Catalyzes the reversible interconversion of serine and glycine with tetrahydrofolate (THF) serving as the one-carbon carrier. This reaction serves as the major source of one-carbon groups required for the biosynthesis of purines, thymidylate, methionine, and other important biomolecules. Also exhibits THF-independent aldolase activity toward beta-hydroxyamino acids, producing glycine and aldehydes, via a retro-aldol mechanism. The sequence is that of Serine hydroxymethyltransferase from Escherichia coli O1:K1 / APEC.